The chain runs to 382 residues: MRGAYYVTIALLVVASSQISAEFGHQLQAYDHDVTAADDAVAETLAKRSLRGSRDVSNDVAIEERTKYSNVIEDGIEMLLRAAEALKEMPRAAVAVKDMPRAEEAVEKMAPIAEQDLLKNVIGADEASKRRRAPHGISTQRTLALPFKEWNTELKQMRGGSVLKKYRSKIKSVHQAFVDLCDKDLNPTVTETALLWGMFDWDVKSYSASAHKHNLIRLAKRYVHKDVVQIQSDDLAWNRWNEVSIPLRIGALNILLNLHYQRWVRMYNIFEQYQSALIGTPVSLELSLGGTTGTSSATALDKHLEVPMNKASTSKGKSSVFTRSSKRAFDSKTGTTSPSSKHSKMQRSSSPLTESTTSGDDPVFTKRSRHGVAVTSLSSISN.

Residues 1–21 form the signal peptide; that stretch reads MRGAYYVTIALLVVASSQISA. Residues 48–65 carry the RxLR-dEER motif; that stretch reads RSLRGSRDVSNDVAIEER. Residues 308–382 form a disordered region; the sequence is MNKASTSKGK…AVTSLSSISN (75 aa). The segment covering 310-323 has biased composition (polar residues); sequence KASTSKGKSSVFTR.

This sequence belongs to the RxLR effector family.

The protein resides in the secreted. The protein localises to the host nucleus. Secreted effector that completely suppresses the host cell death induced by cell death-inducing proteins. The sequence is that of Secreted RxLR effector protein 118 from Plasmopara viticola (Downy mildew of grapevine).